The primary structure comprises 352 residues: D-arabitol-phosphate dehydrogenase (352 aa).

7 residues coordinate Mn(2+): Cys-43, His-65, Cys-96, Cys-99, Cys-102, Cys-110, and Glu-151.

The protein belongs to the zinc-containing alcohol dehydrogenase family. Homotetramer. Mn(2+) serves as cofactor.

It carries out the reaction D-arabinitol 1-phosphate + NAD(+) = D-xylulose 5-phosphate + NADH + H(+). Its activity is regulated as follows. Inhibited by EDTA, 4-hydroxymercuribenzoic acid (PHMB), mercury and zinc ions at a concentration of 2 mM. Its function is as follows. Involved in the arabitol catabolism via the arabitol phosphate route. Catalyzes only the transformation of D-arabitol 1-phosphate (Arb1P) and D-arabitol 5-phosphate (Arb5P) into D-xylulose 5-phosphate (Xlu5P) and ribulose 5-phosphate, respectively. It can use both NAD and NADP. The chain is D-arabitol-phosphate dehydrogenase from Enterococcus avium (Streptococcus avium).